A 722-amino-acid chain; its full sequence is MAEETSNDNLVVQGNEIVPSNGEALAEEVQGDELVLAEDLIQGDEVQGNELVSAEMSIPPTSRRRRKKSLVWEHFTIEAVSGGATRACCKLCKQTFAYSSGSKIAGTSHLKRHITLGSCPKIKNQEHKLLLTPAGGTDNDGEGTVERPSKRRYRYTGYANAAFDQERSCSYLAKMIILHDYPLHIVQQPAFTTFIDSLQPRFRVVDVETMEWEVYAVYQKEKENLMQAFNTMPGRISLAIGLWTTSQTLGYVSLAGQFIDSEWKMHRRMLNFMMVSSPHSENALSEAISTSLSDWNMKDKLFTITLDNDCSSHDIYSANLRDYLSNKNNLMLKGQLFVVRCYAHILNAVAQDVIASIHGVIYNIRESIKFIKASPSCEEKFAEIALQLEIPSTKTLCLDVTTQWNTTYLMLLAALDYKQAFSTLETSDDNYNEAPSAEDWKKVEAACNYLKLLYDSAHSIMAAANPTSNLFFHEAWKLQLELSNATGREDPVFSSIAKDMHERFDKYWKDCNLVLAIAVVMDPRFKMKLVEFSYSKIYGVEAAKYVKVVDDAVHELYNEYVAQPLPLTPAYVEQGGGNNAPASENSTQATAPSTGDGLVDFDMYLSEIATSQPTKSELEQYLDESLTPRIQEFDILNWWKLNTLKYPTLSKMARDILAIPMSMVSSGNSIFSAGTGTRMLDDYRSSSRPEIVEALVCAKDWLQYLPATPEAPSTALVKVDAA.

Residues 66–126 (RKKSLVWEHF…GSCPKIKNQE (61 aa)) form a BED-type zinc finger. The Zn(2+) site is built by Cys-89, Cys-92, His-113, and Cys-119. Positions 572–592 (VEQGGGNNAPASENSTQATAP) are disordered. Polar residues predominate over residues 580–592 (APASENSTQATAP). The segment at 617-702 (ELEQYLDESL…EALVCAKDWL (86 aa)) is HATC (Hobo-Ac-Tam3) domain.

Homodimer.

The protein resides in the nucleus. In terms of biological role, transposase-like protein that is essential for plant growth and development. May regulate global gene expression by recruiting other cellular factors. This Oryza sativa subsp. japonica (Rice) protein is Zinc finger BED domain-containing protein RICESLEEPER 1.